A 108-amino-acid chain; its full sequence is Translation initiation factor 1A (108 aa).

Residues 11–85 (PSRDVPKPEE…NRCDILYKYG (75 aa)) enclose the S1-like domain.

This sequence belongs to the eIF-1A family.

In terms of biological role, seems to be required for maximal rate of protein biosynthesis. Enhances ribosome dissociation into subunits and stabilizes the binding of the initiator Met-tRNA(I) to 40 S ribosomal subunits. The polypeptide is Translation initiation factor 1A (eIF1A) (Saccharolobus islandicus (strain Y.N.15.51 / Yellowstone #2) (Sulfolobus islandicus)).